We begin with the raw amino-acid sequence, 147 residues long: Ubiquitin-conjugating enzyme E2 4 (147 aa).

The region spanning 1-147 (MSLKRINKEL…AKEWTKKYAV (147 aa)) is the UBC core domain. Cysteine 85 serves as the catalytic Glycyl thioester intermediate.

The protein belongs to the ubiquitin-conjugating enzyme family.

The enzyme catalyses S-ubiquitinyl-[E1 ubiquitin-activating enzyme]-L-cysteine + [E2 ubiquitin-conjugating enzyme]-L-cysteine = [E1 ubiquitin-activating enzyme]-L-cysteine + S-ubiquitinyl-[E2 ubiquitin-conjugating enzyme]-L-cysteine.. It participates in protein modification; protein ubiquitination. E2 ubiquitin-conjugating enzyme that catalyzes the covalent attachment of ubiquitin to other proteins. Mediates the selective degradation of short-lived and abnormal proteins. Mediates ubiquitination of PEX5. The protein is Ubiquitin-conjugating enzyme E2 4 (UBC4) of Candida albicans (Yeast).